A 325-amino-acid chain; its full sequence is uncharacterized protein (325 aa).

Positions 1-26 (MQGRVAGSCAPLGLLLVCLHLPGLFA) are cleaved as a signal peptide. Residues 41–60 (GTNLPQLGQPSSTGPSNSEH) are compositionally biased toward polar residues. 2 disordered regions span residues 41 to 110 (GTNL…MDSW) and 147 to 189 (GSGP…AGGK). Positions 147 to 157 (GSGPLPGESSP) are enriched in low complexity.

Binds to numerous extracellular matrix proteins. Expressed in skin and tonsils.

It localises to the secreted. Its subcellular location is the extracellular space. The protein resides in the extracellular matrix. This is an uncharacterized protein from Homo sapiens (Human).